We begin with the raw amino-acid sequence, 376 residues long: N-acetyldiaminopimelate deacetylase (376 aa).

Aspartate 69 is an active-site residue. Glutamate 128 acts as the Proton acceptor in catalysis.

This sequence belongs to the peptidase M20A family. N-acetyldiaminopimelate deacetylase subfamily.

The catalysed reaction is N-acetyl-(2S,6S)-2,6-diaminopimelate + H2O = (2S,6S)-2,6-diaminopimelate + acetate. It functions in the pathway amino-acid biosynthesis; L-lysine biosynthesis via DAP pathway; LL-2,6-diaminopimelate from (S)-tetrahydrodipicolinate (acetylase route): step 3/3. Its function is as follows. Catalyzes the conversion of N-acetyl-diaminopimelate to diaminopimelate and acetate. The protein is N-acetyldiaminopimelate deacetylase of Streptococcus pneumoniae serotype 4 (strain ATCC BAA-334 / TIGR4).